Reading from the N-terminus, the 421-residue chain is Zinc finger protein Pegasus (421 aa).

A disordered region spans residues Gly-35–Asp-55. 3 consecutive C2H2-type zinc fingers follow at residues Leu-82–His-104, His-110–His-132, and Tyr-138–His-161. Residues Ser-229 to Gly-238 are compositionally biased toward polar residues. 2 disordered regions span residues Ser-229–Asp-249 and Gln-292–Pro-358. Low complexity predominate over residues Gln-292–Thr-313. Over residues His-339–Ser-351 the composition is skewed to polar residues. 2 C2H2-type zinc fingers span residues His-366–His-388 and Phe-394–His-418.

This sequence belongs to the Ikaros C2H2-type zinc-finger protein family. In terms of assembly, probably self-associates.

It is found in the nucleus. Transcriptional repressor that binds the core 5'GNNTGTNG-3' DNA consensus sequence. This Gallus gallus (Chicken) protein is Zinc finger protein Pegasus (IKZF5).